We begin with the raw amino-acid sequence, 273 residues long: DNA repair protein RecO (273 aa).

The disordered stretch occupies residues 250 to 273 (NVGQNPSGKDDLNERRDVDGTGES). Residues 257-273 (GKDDLNERRDVDGTGES) are compositionally biased toward basic and acidic residues.

The protein belongs to the RecO family.

In terms of biological role, involved in DNA repair and RecF pathway recombination. This is DNA repair protein RecO from Desulfitobacterium hafniense (strain DSM 10664 / DCB-2).